A 615-amino-acid polypeptide reads, in one-letter code: Leucine aminopeptidase 2 (615 aa).

A peptide-binding positions include 139-141 (QCQ) and 271-276 (PYGGME). His-300 is a Zn(2+) binding site. Glu-301 (proton acceptor) is an active-site residue. Zn(2+) contacts are provided by His-304 and Glu-323. Tyr-386 serves as the catalytic Proton donor.

This sequence belongs to the peptidase M1 family. Requires Zn(2+) as cofactor.

Its subcellular location is the cytoplasm. It is found in the nucleus. The enzyme catalyses an epoxide + H2O = an ethanediol. Aminopeptidase that preferentially cleaves di- and tripeptides. Also has low epoxide hydrolase activity (in vitro). Can hydrolyze the epoxide leukotriene LTA(4) but it forms preferentially 5,6-dihydroxy-7,9,11,14-eicosatetraenoic acid rather than the cytokine leukotriene B(4) as the product compared to the homologous mammalian enzyme (in vitro). This Aspergillus oryzae (strain ATCC 42149 / RIB 40) (Yellow koji mold) protein is Leucine aminopeptidase 2.